Consider the following 237-residue polypeptide: Ribonuclease PH (237 aa).

Phosphate contacts are provided by residues R86 and 124–126 (GTR).

It belongs to the RNase PH family. As to quaternary structure, homohexameric ring arranged as a trimer of dimers.

The catalysed reaction is tRNA(n+1) + phosphate = tRNA(n) + a ribonucleoside 5'-diphosphate. In terms of biological role, phosphorolytic 3'-5' exoribonuclease that plays an important role in tRNA 3'-end maturation. Removes nucleotide residues following the 3'-CCA terminus of tRNAs; can also add nucleotides to the ends of RNA molecules by using nucleoside diphosphates as substrates, but this may not be physiologically important. Probably plays a role in initiation of 16S rRNA degradation (leading to ribosome degradation) during starvation. The sequence is that of Ribonuclease PH from Rhodopseudomonas palustris (strain ATCC BAA-98 / CGA009).